A 104-amino-acid chain; its full sequence is Phosphoribosyl-ATP pyrophosphatase (104 aa).

It belongs to the PRA-PH family.

It is found in the cytoplasm. It catalyses the reaction 1-(5-phospho-beta-D-ribosyl)-ATP + H2O = 1-(5-phospho-beta-D-ribosyl)-5'-AMP + diphosphate + H(+). It functions in the pathway amino-acid biosynthesis; L-histidine biosynthesis; L-histidine from 5-phospho-alpha-D-ribose 1-diphosphate: step 2/9. The sequence is that of Phosphoribosyl-ATP pyrophosphatase from Allorhizobium ampelinum (strain ATCC BAA-846 / DSM 112012 / S4) (Agrobacterium vitis (strain S4)).